A 509-amino-acid polypeptide reads, in one-letter code: Tyrosine-protein phosphatase non-receptor type substrate 1 (509 aa).

Positions 1–31 (MEPAGPAPGRLGPLLFCLLLSASCFCAGASG) are cleaved as a signal peptide. In terms of domain architecture, Ig-like V-type spans 32–138 (KELKVTQADK…IVEPDTEIKS (107 aa)). The Extracellular segment spans residues 32–373 (KELKVTQADK…PDNNAYYNWN (342 aa)). 13 N-linked (GlcNAc...) asparagine glycosylation sites follow: asparagine 54, asparagine 93, asparagine 169, asparagine 181, asparagine 205, asparagine 209, asparagine 242, asparagine 246, asparagine 271, asparagine 293, asparagine 312, asparagine 320, and asparagine 345. Residues cysteine 55 and cysteine 122 are joined by a disulfide bond. 2 consecutive Ig-like C1-type domains span residues 150–248 (PSSP…ANFS) and 255–349 (PTLK…HTVR). A disulfide bridge connects residues cysteine 172 and cysteine 229. A disulfide bridge connects residues cysteine 274 and cysteine 332. The helical transmembrane segment at 374 to 394 (VFIGVGVACALLVVLLMAALY) threads the bilayer. The Cytoplasmic segment spans residues 395-509 (LLRIKQKKAK…EYASVQVQRK (115 aa)). Residue tyrosine 436 is modified to Phosphotyrosine; by Tyr-kinases. The short motif at 436–439 (YADL) is the SH2-binding element. The tract at residues 441–472 (LPKEKKPAPRVPEPNNHTEYASIETGKLPRPE) is disordered. Positions 446-451 (KPAPRV) match the SH3-binding motif. 3 positions are modified to phosphotyrosine; by Tyr-kinases: tyrosine 460, tyrosine 477, and tyrosine 501. 3 short sequence motifs (SH2-binding) span residues 460-463 (YASI), 477-480 (YADL), and 501-504 (YASV). Residues 485-509 (LNRAQPTPKPEPSFSEYASVQVQRK) are disordered. Residues 500 to 509 (EYASVQVQRK) show a composition bias toward polar residues.

Binds PTPN11 when tyrosine-phosphorylated, except in macrophages, where it primarily binds PTPN6. Binds GRB2 in vitro. Binds FGR. Binds JAK2 irrespective of its phosphorylation status and forms a stable complex. Binds SCAP1 and/or SCAP2. The resulting complex recruits FYB1. Binds PTK2B. Interacts with TRIM2. N-glycosylated. In terms of processing, phosphorylated on tyrosine residues in response to insulin, cell adhesion or epidermal growth factors. Dephosphorylated by PTPN11. Highly expressed in brain, spleen, lung, liver and kidney. Detected at lower levels in heart. Highly expressed in alveolar and peritoneal macrophages, and at lower levels in dendritic cells.

Its subcellular location is the membrane. Its function is as follows. Immunoglobulin-like cell surface receptor for CD47. Acts as docking protein and induces translocation of PTPN6, PTPN11 and other binding partners from the cytosol to the plasma membrane. Supports adhesion of cerebellar neurons, neurite outgrowth and glial cell attachment. May play a key role in intracellular signaling during synaptogenesis and in synaptic function. Involved in the negative regulation of receptor tyrosine kinase-coupled cellular responses induced by cell adhesion, growth factors or insulin. Mediates negative regulation of phagocytosis, mast cell activation and dendritic cell activation. CD47 binding prevents maturation of immature dendritic cells and inhibits cytokine production by mature dendritic cells. Plays a role in antiviral immunity and limits new world arenavirus infection by decreasing virus internalization. Receptor for THBS1. Interaction with THBS1 stimulates phosphorylation of SIRPA. In response to THBS1, involved in ROS signaling in non-phagocytic cells, stimulating NADPH oxidase-derived ROS production. The polypeptide is Tyrosine-protein phosphatase non-receptor type substrate 1 (Sirpa) (Rattus norvegicus (Rat)).